A 386-amino-acid polypeptide reads, in one-letter code: Centrosomal protein of 44 kDa (386 aa).

Residues 11 to 194 form a binds with microtubules and centrioles region; sequence RKLEQVLRSL…GVPEGTVTST (184 aa). Positions 232–262 form a coiled coil; sequence ELTALQIALAECQEKLKKLTWIEKRLECLEA. A Phosphoserine modification is found at serine 329. The stretch at 359–382 forms a coiled coil; it reads SEETTMQKMERMKKMFEETAELLK.

In terms of assembly, interacts with CROCC. Interacts with POC1B; the interaction is direct and recruits POC1B to centriolar microtubules. Binds to centriolar microtubules.

It is found in the cytoplasm. It localises to the cytoskeleton. Its subcellular location is the microtubule organizing center. The protein resides in the centrosome. The protein localises to the centriole. It is found in the spindle pole. It localises to the midbody. Its function is as follows. Centriole-enriched microtubule-binding protein involved in centriole biogenesis. In collaboration with CEP295 and POC1B, is required for the centriole-to-centrosome conversion by ensuring the formation of bona fide centriole wall. Functions as a linker component that maintains centrosome cohesion. Associates with CROCC and regulates its stability and localization to the centrosome. The protein is Centrosomal protein of 44 kDa (Cep44) of Rattus norvegicus (Rat).